The primary structure comprises 222 residues: Ribosomal RNA small subunit methyltransferase G (222 aa).

S-adenosyl-L-methionine is bound by residues Gly85, Leu90, 108–110 (DAT), 136–137 (VE), and Arg150.

It belongs to the methyltransferase superfamily. RNA methyltransferase RsmG family.

It is found in the cytoplasm. Its function is as follows. Specifically methylates the N7 position of a guanine in 16S rRNA. The polypeptide is Ribosomal RNA small subunit methyltransferase G (Chlorobium phaeobacteroides (strain DSM 266 / SMG 266 / 2430)).